A 182-amino-acid chain; its full sequence is Peptide methionine sulfoxide reductase MsrA (182 aa).

Cys-13 is an active-site residue.

This sequence belongs to the MsrA Met sulfoxide reductase family.

It catalyses the reaction L-methionyl-[protein] + [thioredoxin]-disulfide + H2O = L-methionyl-(S)-S-oxide-[protein] + [thioredoxin]-dithiol. The catalysed reaction is [thioredoxin]-disulfide + L-methionine + H2O = L-methionine (S)-S-oxide + [thioredoxin]-dithiol. Its function is as follows. Has an important function as a repair enzyme for proteins that have been inactivated by oxidation. Catalyzes the reversible oxidation-reduction of methionine sulfoxide in proteins to methionine. The chain is Peptide methionine sulfoxide reductase MsrA from Mycobacterium bovis (strain ATCC BAA-935 / AF2122/97).